The primary structure comprises 367 residues: Ribosomal lysine N-methyltransferase 5 (367 aa).

The tract at residues 55–74 (EGGRKKKRVRRRNKASSVEE) is disordered. The span at 58-68 (RKKKRVRRRNK) shows a compositional bias: basic residues. S-adenosyl-L-methionine is bound by residues Trp110, 170–172 (GAG), Asp192, Trp256, and Met288.

It belongs to the class I-like SAM-binding methyltransferase superfamily. RKM5 family.

In terms of biological role, S-adenosyl-L-methionine-dependent protein-lysine N-methyltransferase that monomethylates 60S ribosomal protein L1 (RPL1A and RPL1B) at 'Lys-46'. This Saccharomyces cerevisiae (strain Lalvin EC1118 / Prise de mousse) (Baker's yeast) protein is Ribosomal lysine N-methyltransferase 5 (RKM5).